The sequence spans 220 residues: Fibroblast growth factor 3 (220 aa).

The N-terminal stretch at 1-19 (MLVIWLLLLALLPEPRVPA) is a signal peptide. The tract at residues 19–40 (AATASPRAPRDAGGRGGVYEHL) is disordered. An N-linked (GlcNAc...) asparagine glycan is attached at asparagine 66.

It belongs to the heparin-binding growth factors family.

The protein localises to the secreted. Plays an important role in the regulation of embryonic development, cell proliferation, and cell differentiation. The chain is Fibroblast growth factor 3 (FGF3) from Gallus gallus (Chicken).